Reading from the N-terminus, the 397-residue chain is Tryptophan synthase beta chain (397 aa).

K86 carries the N6-(pyridoxal phosphate)lysine modification.

This sequence belongs to the TrpB family. In terms of assembly, tetramer of two alpha and two beta chains. Pyridoxal 5'-phosphate is required as a cofactor.

The catalysed reaction is (1S,2R)-1-C-(indol-3-yl)glycerol 3-phosphate + L-serine = D-glyceraldehyde 3-phosphate + L-tryptophan + H2O. It participates in amino-acid biosynthesis; L-tryptophan biosynthesis; L-tryptophan from chorismate: step 5/5. Its function is as follows. The beta subunit is responsible for the synthesis of L-tryptophan from indole and L-serine. The sequence is that of Tryptophan synthase beta chain from Aeromonas hydrophila subsp. hydrophila (strain ATCC 7966 / DSM 30187 / BCRC 13018 / CCUG 14551 / JCM 1027 / KCTC 2358 / NCIMB 9240 / NCTC 8049).